Consider the following 152-residue polypeptide: MQRTLVLLKPDCVQRRLIGDVLSRFEAKGLHIVAMKLLQVTPELSKQHYAEHVEKPFYPSLEEFITSAPVVAIALEGLEVIRVVRDMLGATNGLQAAPGTLRGDYSSSRQMNLVHASDSEESAQRELDLYFNADEFCDYSLVLTPFMRADDE.

6 residues coordinate ATP: K9, F57, R85, T91, R102, and N112. Residue H115 is the Pros-phosphohistidine intermediate of the active site.

The protein belongs to the NDK family. As to quaternary structure, homotetramer. It depends on Mg(2+) as a cofactor.

The protein localises to the cytoplasm. It catalyses the reaction a 2'-deoxyribonucleoside 5'-diphosphate + ATP = a 2'-deoxyribonucleoside 5'-triphosphate + ADP. It carries out the reaction a ribonucleoside 5'-diphosphate + ATP = a ribonucleoside 5'-triphosphate + ADP. Functionally, major role in the synthesis of nucleoside triphosphates other than ATP. The ATP gamma phosphate is transferred to the NDP beta phosphate via a ping-pong mechanism, using a phosphorylated active-site intermediate. The sequence is that of Nucleoside diphosphate kinase from Rhodopirellula baltica (strain DSM 10527 / NCIMB 13988 / SH1).